Consider the following 208-residue polypeptide: Protein-L-isoaspartate O-methyltransferase (208 aa).

Residue S59 is part of the active site.

The protein belongs to the methyltransferase superfamily. L-isoaspartyl/D-aspartyl protein methyltransferase family.

It is found in the cytoplasm. It catalyses the reaction [protein]-L-isoaspartate + S-adenosyl-L-methionine = [protein]-L-isoaspartate alpha-methyl ester + S-adenosyl-L-homocysteine. In terms of biological role, catalyzes the methyl esterification of L-isoaspartyl residues in peptides and proteins that result from spontaneous decomposition of normal L-aspartyl and L-asparaginyl residues. It plays a role in the repair and/or degradation of damaged proteins. The polypeptide is Protein-L-isoaspartate O-methyltransferase (Proteus mirabilis (strain HI4320)).